We begin with the raw amino-acid sequence, 643 residues long: MEDSEGTDGTDEDGCRAGGWFHVEAIITHGQSQVSSDEDEDETETREDLDFIDNRVPGDGQEVPLQLYAQQIAQDDEATVQALKRKFVASPLSACSCIENDLSPRLDAISLNRKSEKAKRRLFETEPPDSGYGNTQMVVGTPEEVTGEDNSQGGRPVDVREEERQGGDGEADLTVHTPQSGTDAAGSVLTLLKSSNLKATLLSKFKELYGVGYYELVRQFKSSRTACADWVVCAFRVYYAVAEGIKQLIQPHTQYAHIQIQTSSWGMVVFMLLRYNCAKNRDTVSKNMSMLLNIPEKHMLIEPPKLRSTPAALYWYKTSMGNGSEVYGETPEWIVRQTLIGHSMEDEQFKLSVMVQYAYDHDITDESALAFEYAQLADVDANAAAFLNSNCQAKYLKDAVTMCRHYKRAEREQMSMSQWITFRGSKISEEGDWKPIVKFLRHQGVEFVSFLAAFKSFLKGVPKKNCIVFYGPADTGKSYFCMSLLQFLGGAVISYANSSSHFWLQPLADSKIGLLDDATAQCWTYIDTYLRNLLDGNPFSIDRKHKTLLQIKCPPLMITTNINPLEEDRWKYLRSRVTLFKFTNPFPFASPGEPLYPINNANWKCFFQRSWSRLDLNSPEDQEDNGNTGEPFRCVPGDVARTV.

The interval 28–60 (THGQSQVSSDEDEDETETREDLDFIDNRVPGDG) is disordered. A compositionally biased stretch (acidic residues) spans 36–45 (SDEDEDETET). Residues 84–86 (KRK) carry the Nuclear localization signal motif. A phosphoserine; by host mark is found at serine 90 and serine 103. The Nuclear export signal motif lies at 102–111 (LSPRLDAISL). The interval 119 to 179 (KRRLFETEPP…EADLTVHTPQ (61 aa)) is disordered. The span at 157–167 (VDVREEERQGG) shows a compositional bias: basic and acidic residues. The tract at residues 180-346 (SGTDAAGSVL…QTLIGHSMED (167 aa)) is DNA-binding region. The 151-residue stretch at 445-595 (VEFVSFLAAF…FPFASPGEPL (151 aa)) folds into the SF3 helicase domain. 471-478 (GPADTGKS) provides a ligand contact to ATP. Lysine 552 participates in a covalent cross-link: Glycyl lysine isopeptide (Lys-Gly) (interchain with G-Cter in SUMO).

The protein belongs to the papillomaviridae E1 protein family. In terms of assembly, can form hexamers. Interacts with E2 protein; this interaction increases E1 DNA binding specificity. Interacts with host DNA polymerase subunit POLA2. Interacts with host single stranded DNA-binding protein RPA1. Interacts with host TOP1; this interaction stimulates the enzymatic activity of TOP1. Phosphorylated. Post-translationally, sumoylated.

It is found in the host nucleus. The catalysed reaction is Couples ATP hydrolysis with the unwinding of duplex DNA by translocating in the 3'-5' direction.. It carries out the reaction ATP + H2O = ADP + phosphate + H(+). Functionally, ATP-dependent DNA 3'-5' helicase required for initiation of viral DNA replication. It forms a complex with the viral E2 protein. The E1-E2 complex binds to the replication origin which contains binding sites for both proteins. During the initial step, a dimer of E1 interacts with a dimer of protein E2 leading to a complex that binds the viral origin of replication with high specificity. Then, a second dimer of E1 displaces the E2 dimer in an ATP-dependent manner to form the E1 tetramer. Following this, two E1 monomers are added to each half of the site, which results in the formation of two E1 trimers on the viral ori. Subsequently, two hexamers will be created. The double hexamer acts as a bi-directional helicase machinery and unwinds the viral DNA and then recruits the host DNA polymerase to start replication. In Human papillomavirus 57, this protein is Replication protein E1.